A 224-amino-acid chain; its full sequence is Putative endoglucanase X (224 aa).

The interval 147 to 168 (QTQPTPSPSPTPTDSPLVKKGD) is disordered. Residues 162–224 (PLVKKGDVNL…SILKRILLRN (63 aa)) enclose the Dockerin domain.

The catalysed reaction is Endohydrolysis of (1-&gt;4)-beta-D-glucosidic linkages in cellulose, lichenin and cereal beta-D-glucans.. This enzyme catalyzes the endohydrolysis of 1,4-beta-glucosidic linkages in cellulose, lichenin and cereal beta-D-glucans. This chain is Putative endoglucanase X (celX), found in Acetivibrio thermocellus (Hungateiclostridium thermocellum).